A 329-amino-acid chain; its full sequence is Beta-ketoacyl-[acyl-carrier-protein] synthase III (329 aa).

Active-site residues include cysteine 112 and histidine 253. Positions glutamine 254–arginine 258 are ACP-binding. Residue asparagine 283 is part of the active site.

Belongs to the thiolase-like superfamily. FabH family. Homodimer.

It is found in the cytoplasm. The catalysed reaction is malonyl-[ACP] + acetyl-CoA + H(+) = 3-oxobutanoyl-[ACP] + CO2 + CoA. It participates in lipid metabolism; fatty acid biosynthesis. Its function is as follows. Catalyzes the condensation reaction of fatty acid synthesis by the addition to an acyl acceptor of two carbons from malonyl-ACP. Catalyzes the first condensation reaction which initiates fatty acid synthesis and may therefore play a role in governing the total rate of fatty acid production. Possesses both acetoacetyl-ACP synthase and acetyl transacylase activities. Its substrate specificity determines the biosynthesis of branched-chain and/or straight-chain of fatty acids. The sequence is that of Beta-ketoacyl-[acyl-carrier-protein] synthase III from Gloeobacter violaceus (strain ATCC 29082 / PCC 7421).